A 93-amino-acid polypeptide reads, in one-letter code: Cell division protein CrgA (93 aa).

The next 2 membrane-spanning stretches (helical) occupy residues 31–51 (VWFV…LMVF) and 70–90 (LGPW…LLTM).

It belongs to the CrgA family.

It localises to the cell membrane. Its function is as follows. Involved in cell division. This chain is Cell division protein CrgA, found in Mycobacterium marinum (strain ATCC BAA-535 / M).